A 145-amino-acid chain; its full sequence is MDVQIFPHRLLGADTTEKLLNRLEDISGVKRMVIHGQRLPPEDHPDRRIISVKGHEFELQVKTGRVLLEIEDEDTIADIKRVCEDLLPFGYDVTPGKYIRTQKTVTDEIKYGEDLDKVPEELIGLTDQNARLSERATIIKRKKEH.

In terms of assembly, MCR is composed of three subunits: alpha, beta, and gamma. The function of proteins C and D is not known.

The protein is Methyl-coenzyme M reductase I operon protein D (mcrD) of Methanothermobacter thermautotrophicus (strain ATCC 29096 / DSM 1053 / JCM 10044 / NBRC 100330 / Delta H) (Methanobacterium thermoautotrophicum).